The following is a 1002-amino-acid chain: Carboxypeptidase Y (1002 aa).

Residues 1–18 form the signal peptide; it reads MLMKQTFLYFLLTCVVSA. The propeptide occupies 19–521; it reads QFNGYVPPEQ…AYLEMLKAEG (503 aa). Disordered regions lie at residues 51–91, 124–436, and 527–546; these read QEES…TALE, DEDE…NMQS, and AFRD…ADSS. Composition is skewed to basic and acidic residues over residues 63–81 and 127–143; these read PERD…HEFN and EHVR…EDAP. Residues 144 to 170 are compositionally biased toward basic residues; that stretch reads RRKHGKCKGKGKHHKGKHAKGKGKKSH. The segment covering 171–205 has biased composition (basic and acidic residues); the sequence is PKPEDDSVFFDDERPKHHEFDDEDREFPAHHEPGE. A run of 15 repeats spans residues 225-237, 238-250, 251-263, 264-276, 277-289, 290-302, 303-315, 316-328, 329-341, 361-369, 370-378, 379-387, 388-396, 397-405, and 406-414. The 9 X 13 AA tandem repeats of M-H-H-E-P-G-E-H-M-P-P-P-P stretch occupies residues 225-341; it reads MHHEPGEHMP…EPGEHMPPPP (117 aa). The segment covering 343–431 has biased composition (basic and acidic residues); sequence KHHELEEHEG…PKEKHNERPE (89 aa). A 7 X 9 AA tandem repeats of D-K-E-H-H-K-G-P-K region spans residues 361 to 423; sequence DKEHHKGPKD…KDKEHHQGPK (63 aa). Residues 415–423 form a 2-7; approximate repeat; sequence DKEHHQGPK. 5 disulfides stabilise this stretch: cysteine 627–cysteine 880, cysteine 776–cysteine 789, cysteine 799–cysteine 822, cysteine 806–cysteine 815, and cysteine 844–cysteine 851. Asparagine 659 is a glycosylation site (N-linked (GlcNAc...) asparagine). The active site involves serine 715. Residue aspartate 921 is part of the active site. Residue cysteine 924 coordinates substrate. Histidine 978 is a catalytic residue. Methionine 979 provides a ligand contact to substrate.

The protein belongs to the peptidase S10 family. As to quaternary structure, heterodimer of two subunits of 32 kDa and 19 kDa derived from the precursor protein and linked by a disulfide bond.

The protein resides in the vacuole. The enzyme catalyses Release of a C-terminal amino acid with broad specificity.. Involved in degradation of small peptides. Digests preferentially peptides containing an aliphatic or hydrophobic residue in P1' position, as well as methionine, leucine or phenylalanine in P1 position of ester substrate. This Schizosaccharomyces pombe (strain 972 / ATCC 24843) (Fission yeast) protein is Carboxypeptidase Y (cpy1).